The following is a 103-amino-acid chain: Large ribosomal subunit protein uL24 (103 aa).

It belongs to the universal ribosomal protein uL24 family. As to quaternary structure, part of the 50S ribosomal subunit.

In terms of biological role, one of two assembly initiator proteins, it binds directly to the 5'-end of the 23S rRNA, where it nucleates assembly of the 50S subunit. Functionally, one of the proteins that surrounds the polypeptide exit tunnel on the outside of the subunit. This is Large ribosomal subunit protein uL24 from Enterococcus faecalis (strain ATCC 700802 / V583).